Consider the following 195-residue polypeptide: HTH-type transcriptional regulator BetI (195 aa).

One can recognise an HTH tetR-type domain in the interval 8–68 (EIRRAQLIDA…ATMRHVLRDL (61 aa)). The H-T-H motif DNA-binding region spans 31-50 (TLASVAQRASISTGIVSHYF).

It functions in the pathway amine and polyamine biosynthesis; betaine biosynthesis via choline pathway [regulation]. Functionally, repressor involved in the biosynthesis of the osmoprotectant glycine betaine. It represses transcription of the choline transporter BetT and the genes of BetAB involved in the synthesis of glycine betaine. The polypeptide is HTH-type transcriptional regulator BetI (Paraburkholderia xenovorans (strain LB400)).